The sequence spans 742 residues: Hapless 2 (742 aa).

The signal sequence occupies residues 1 to 19 (MKFLAFGLIYFHFCILNRC). Over 20–540 (EYITSSTIQK…CYFSAGCIKE (521 aa)) the chain is Extracellular. 7 cysteine pairs are disulfide-bonded: Cys-30-Cys-40, Cys-118-Cys-147, Cys-129-Cys-182, Cys-148-Cys-312, Cys-150-Cys-168, Cys-295-Cys-319, and Cys-431-Cys-470. The interval 152–179 (LSDILGMGNDLSRGKVCYALNLGAGSAT) is important for membrane fusion. The chain crosses the membrane as a helical span at residues 541–561 (AFKSIASIAGVASALALVIFL). Residues 562–742 (AKNGYLVPII…STSPLYLLIE (181 aa)) lie on the Cytoplasmic side of the membrane.

Belongs to the HAP2/GCS1 family.

It is found in the cell membrane. The protein resides in the cell junction. During fertilization, required for the formation of intercellular membrane pores and subsequent exchange of gametic pronuclei between cells. Probably initiates the formation of intercellular membrane pores by inserting part of its extracellular domain into the cell membrane of the adjoining cell in the mating pair. Mating requires the presence of HAP2 on at least one of the two cells. Mating efficiency is high when HAP2 is present on both cells, and is strongly reduced when HAP2 is present on only one of the two cells. In Tetrahymena thermophila, this protein is Hapless 2.